The sequence spans 131 residues: Small ribosomal subunit protein uS8 (131 aa).

This sequence belongs to the universal ribosomal protein uS8 family. In terms of assembly, part of the 30S ribosomal subunit. Contacts proteins S5 and S12.

One of the primary rRNA binding proteins, it binds directly to 16S rRNA central domain where it helps coordinate assembly of the platform of the 30S subunit. The protein is Small ribosomal subunit protein uS8 of Dictyoglomus thermophilum (strain ATCC 35947 / DSM 3960 / H-6-12).